We begin with the raw amino-acid sequence, 269 residues long: Tryptophan synthase alpha chain (269 aa).

Residues glutamate 49 and aspartate 60 each act as proton acceptor in the active site.

The protein belongs to the TrpA family. As to quaternary structure, tetramer of two alpha and two beta chains.

The enzyme catalyses (1S,2R)-1-C-(indol-3-yl)glycerol 3-phosphate + L-serine = D-glyceraldehyde 3-phosphate + L-tryptophan + H2O. Its pathway is amino-acid biosynthesis; L-tryptophan biosynthesis; L-tryptophan from chorismate: step 5/5. In terms of biological role, the alpha subunit is responsible for the aldol cleavage of indoleglycerol phosphate to indole and glyceraldehyde 3-phosphate. The chain is Tryptophan synthase alpha chain from Proteus mirabilis (strain HI4320).